The sequence spans 1605 residues: Kinesin-like protein klp-12 (1605 aa).

The 354-residue stretch at 5-358 folds into the Kinesin motor domain; the sequence is CVQVALRIRP…MKYANRAKEI (354 aa). ATP is bound at residue 84 to 91; sequence GQTGSGKT. The Mg(2+) site is built by threonine 91 and serine 217. Disordered stretches follow at residues 548–596, 1085–1152, and 1198–1232; these read GENV…EESE, VSDA…SNNN, and SRSN…SSSK. Residues 550 to 559 are compositionally biased toward polar residues; it reads NVSSEYSSMA. Positions 560 to 596 are enriched in acidic residues; the sequence is QDEDGTSNEAEELLDEEDLDEDEDETAEEKQEQEESE. A coiled-coil region spans residues 575–730; sequence EEDLDEDEDE…KKAKVELIKK (156 aa). Residues 1116–1152 are compositionally biased toward polar residues; that stretch reads VSTSPASTSFANSTSQSPSFSRNTRFRSTVGGVSNNN. Over residues 1200–1232 the composition is skewed to low complexity; that stretch reads SNLMSSSSSTTTTTLSSSNLLNPRGTTSSSSSK. WD repeat units follow at residues 1282-1319, 1389-1427, 1525-1566, and 1573-1605; these read GHAR…EIRT, FLET…PLGR, AHQQ…RMKL, and AHQE…SNAV.

The protein belongs to the TRAFAC class myosin-kinesin ATPase superfamily. Kinesin family. As to quaternary structure, component of a complex at least composed of alpha tubulin and beta tubulin. Within the complex, interacts with the alpha tubulin and beta tubulin dimer.

It localises to the cytoplasm. The protein localises to the cytoskeleton. Microtubule-binding motor protein which has ATPase activity. In complex with alpha and beta tubulins, preferentially binds to the growing microtubule plus-end to stabilize it and detaches following ATP hydrolysis. Negatively regulates axonal length through inhibiting microtubule polymerization at its plus-end. The sequence is that of Kinesin-like protein klp-12 from Caenorhabditis elegans.